A 738-amino-acid chain; its full sequence is Ethylene receptor 1 (738 aa).

3 consecutive transmembrane segments (helical) span residues 23 to 43, 53 to 73, and 92 to 112; these read ISDF…IYFV, WVLV…LINL, and VLTA…IPDL. Cu cation contacts are provided by cysteine 65 and histidine 69. The GAF domain maps to 158–307; sequence DRHTILKTTL…VVADQVAVAL (150 aa). The 236-residue stretch at 350–585 folds into the Histidine kinase domain; that stretch reads VMNHEMRTPM…IFDVKLGISE (236 aa). The residue at position 353 (histidine 353) is a Phosphohistidine; by autocatalysis. Residues 470–473, aspartate 513, lysine 529, serine 544, and leucine 548 each bind ADP; that span reads NAVK. The region spanning 611–729 is the Response regulatory domain; sequence KVLVMDENGV…NIRDVLSDLL (119 aa). Aspartate 659 carries the 4-aspartylphosphate modification. A Glycyl lysine isopeptide (Lys-Gly) (interchain with G-Cter in ubiquitin) cross-link involves residue lysine 714.

This sequence belongs to the ethylene receptor family. In terms of assembly, homodimer; disulfide-linked. Heteromer with ERS1, ERS2, ETR2 and EIN4. Interacts with AHP1, AHP2 and AHP3. Interacts with RTE1. Interacts with EIN2. Cu cation is required as a cofactor. Post-translationally, autophosphorylated. Phosphorylation at His-353 modulates the interaction with EIN2. Leaves, roots, stems, seedlings, flowers, anthers, carpels and ovules.

Its subcellular location is the endoplasmic reticulum membrane. It catalyses the reaction ATP + protein L-histidine = ADP + protein N-phospho-L-histidine.. Functionally, ethylene receptor related to bacterial two-component regulators. Acts as a redundant negative regulator of ethylene signaling. In the presence of ethylene, the auto-kinase activity of ETR1 is inhibited and the non-phosphorylated kinase domain binds tightly to the corresponding domain of EIN2. The polypeptide is Ethylene receptor 1 (Arabidopsis thaliana (Mouse-ear cress)).